A 341-amino-acid chain; its full sequence is MATIKDVAKRANVSTTTVSHVINKTRFVAEETRNAVWAAIKELHYSPSAVARSLKVNHTKSIGLLATSSEAAYFAEIIEAVEKNCFQKGYTLILGNAWNNLEKQRAYLSMMAQKRVDGLLVMCSEYPEPLLSMLEEYRHIPMVVMDWGEAKADFTDTVIDNAFAGGYMAGRYLVERGHRDIGVIPGPLERNTGAGRLAGFMKAMEEALINVPDNWIVQGDFEPESGYHAMQQILSQSHRPTAVFCGGDIMAMGALCAADEMGLRVPQDVSVIGYDNVRNARFFTPALTTIHQPKDSLGETAFNMLLDRIVNKREESQSIEVHPRLVERRSVADGPFRDYRR.

One can recognise an HTH lacI-type domain in the interval A2–V56. Residues I4–N23 constitute a DNA-binding region (H-T-H motif). The DNA-binding element occupies S48 to V56. Hypoxanthine-binding residues include Y73, R190, T192, F221, and D275.

As to quaternary structure, homodimer.

It participates in purine metabolism; purine nucleotide biosynthesis [regulation]. Is the main repressor of the genes involved in the de novo synthesis of purine nucleotides, regulating purB, purC, purEK, purF, purHD, purL, purMN and guaBA expression. PurR is allosterically activated to bind its cognate DNA by binding the purine corepressors, hypoxanthine or guanine, thereby effecting transcription repression. The protein is HTH-type transcriptional repressor PurR of Salmonella typhi.